The primary structure comprises 187 residues: Keratin-associated protein 5-8 (187 aa).

Repeat copies occupy residues 28–31 (CCVP), 34–37 (CCKP), 40–43 (CCVP), 109–112 (CCKP), 119–122 (CCKP), 138–141 (CCKP), 148–151 (CCKP), 167–170 (CCKP), and 177–180 (CCVP). Positions 28–180 (CCVPICCCKP…CCSQSSCCVP (153 aa)) are 9 X 4 AA repeats of C-C-X-P.

It belongs to the KRTAP type 5 family. Restricted to hair root, not detected in any other tissues. Expressed in cuticle layers of differentiating hair follicles.

In terms of biological role, in the hair cortex, hair keratin intermediate filaments are embedded in an interfilamentous matrix, consisting of hair keratin-associated protein (KRTAP), which are essential for the formation of a rigid and resistant hair shaft through their extensive disulfide bond cross-linking with abundant cysteine residues of hair keratins. The matrix proteins include the high-sulfur and high-glycine-tyrosine keratins. The sequence is that of Keratin-associated protein 5-8 (KRTAP5-8) from Homo sapiens (Human).